Here is a 529-residue protein sequence, read N- to C-terminus: Peptide chain release factor 3 (529 aa).

In terms of domain architecture, tr-type G spans 11–280; sequence KKRRTFAIIS…GLVEWAPAPL (270 aa). Residues 20-27, 88-92, and 142-145 contribute to the GTP site; these read SHPDAGKT, DTPGH, and NKLD.

It belongs to the TRAFAC class translation factor GTPase superfamily. Classic translation factor GTPase family. PrfC subfamily.

The protein localises to the cytoplasm. Increases the formation of ribosomal termination complexes and stimulates activities of RF-1 and RF-2. It binds guanine nucleotides and has strong preference for UGA stop codons. It may interact directly with the ribosome. The stimulation of RF-1 and RF-2 is significantly reduced by GTP and GDP, but not by GMP. This is Peptide chain release factor 3 from Alteromonas mediterranea (strain DSM 17117 / CIP 110805 / LMG 28347 / Deep ecotype).